We begin with the raw amino-acid sequence, 395 residues long: Galactokinase (395 aa).

Residue E39–D42 coordinates substrate. ATP contacts are provided by residues S73 and G127–S133. Positions 133 and 165 each coordinate Mg(2+). D177 acts as the Proton acceptor in catalysis. A substrate-binding site is contributed by Y227.

This sequence belongs to the GHMP kinase family. GalK subfamily.

Its subcellular location is the cytoplasm. It carries out the reaction alpha-D-galactose + ATP = alpha-D-galactose 1-phosphate + ADP + H(+). The protein operates within carbohydrate metabolism; galactose metabolism. Catalyzes the transfer of the gamma-phosphate of ATP to D-galactose to form alpha-D-galactose-1-phosphate (Gal-1-P). The polypeptide is Galactokinase (Halalkalibacterium halodurans (strain ATCC BAA-125 / DSM 18197 / FERM 7344 / JCM 9153 / C-125) (Bacillus halodurans)).